A 507-amino-acid polypeptide reads, in one-letter code: GMP synthase [glutamine-hydrolyzing] (507 aa).

In terms of domain architecture, Glutamine amidotransferase type-1 spans 4 to 193; it reads KIIILDFGSQ…VVDVCGCKQD (190 aa). Cys-79 acts as the Nucleophile in catalysis. Catalysis depends on residues His-167 and Glu-169. In terms of domain architecture, GMPS ATP-PPase spans 194 to 382; the sequence is WSPASFIEST…LGMPEHLITR (189 aa). 221–227 provides a ligand contact to ATP; the sequence is SGGVDSS.

As to quaternary structure, homodimer.

The catalysed reaction is XMP + L-glutamine + ATP + H2O = GMP + L-glutamate + AMP + diphosphate + 2 H(+). It functions in the pathway purine metabolism; GMP biosynthesis; GMP from XMP (L-Gln route): step 1/1. Catalyzes the synthesis of GMP from XMP. The protein is GMP synthase [glutamine-hydrolyzing] of Bacteroides fragilis (strain ATCC 25285 / DSM 2151 / CCUG 4856 / JCM 11019 / LMG 10263 / NCTC 9343 / Onslow / VPI 2553 / EN-2).